The sequence spans 352 residues: 7,8-didemethyl-8-hydroxy-5-deazariboflavin synthase (352 aa).

The Radical SAM core domain occupies I35–N275. [4Fe-4S] cluster is bound by residues C49, C53, and C56.

The protein belongs to the radical SAM superfamily. CofG family. As to quaternary structure, consists of two subunits, CofG and CofH. It depends on [4Fe-4S] cluster as a cofactor.

The enzyme catalyses 5-amino-5-(4-hydroxybenzyl)-6-(D-ribitylimino)-5,6-dihydrouracil + S-adenosyl-L-methionine = 7,8-didemethyl-8-hydroxy-5-deazariboflavin + 5'-deoxyadenosine + L-methionine + NH4(+) + H(+). The protein operates within cofactor biosynthesis; coenzyme F0 biosynthesis. In terms of biological role, catalyzes the radical-mediated synthesis of 7,8-didemethyl-8-hydroxy-5-deazariboflavin from 5-amino-5-(4-hydroxybenzyl)-6-(D-ribitylimino)-5,6-dihydrouracil. In Methanococcus maripaludis (strain C5 / ATCC BAA-1333), this protein is 7,8-didemethyl-8-hydroxy-5-deazariboflavin synthase.